A 670-amino-acid chain; its full sequence is Soluble lamin-associated protein of 75 kDa (670 aa).

Disordered regions lie at residues 273–301 (PKRP…SSEM) and 314–670 (STSE…AKLT). A Phosphoserine modification is found at Ser350. A compositionally biased stretch (polar residues) spans 358 to 375 (SQTSLTASINKLESTARP). Over residues 378–387 (SSEEFLEEEP) the composition is skewed to acidic residues. Residue Ser379 is modified to Phosphoserine. The segment covering 414–423 (EKQDGEKESE) has biased composition (basic and acidic residues). Positions 442 to 453 (TEEEDSTSEVLD) are enriched in acidic residues. Ser449 carries the post-translational modification Phosphoserine. Over residues 460 to 470 (PFNSSEDSTNL) the composition is skewed to polar residues. Basic and acidic residues-rich tracts occupy residues 479 to 494 (KPPE…RIPD) and 504 to 514 (SDEKGHMEEKL). Phosphoserine is present on Ser515. Polar residues-rich tracts occupy residues 558–569 (ENLSPNTTSSLE) and 579–591 (PQET…QSSL). 3 positions are modified to phosphoserine: Ser615, Ser618, and Ser635. Residues 651–670 (NLRRKAKGHKGPAKKKAKLT) show a composition bias toward basic residues.

It belongs to the FAM169 family.

It is found in the nucleus envelope. The protein localises to the nucleus inner membrane. The protein is Soluble lamin-associated protein of 75 kDa (FAM169A) of Homo sapiens (Human).